Reading from the N-terminus, the 473-residue chain is MKSILDGLADTTFRTITTDLLYVGSNDIQYEDIKGDMASKLGYFPQKFPLTSFRGSPFQEKMTAGDNSPLVPAGDTTNITEFYNKSLSSFKENEDNIQCGENFMDMECFMILNPSQQLAIAVLSLTLGTFTVLENLLVLCVILHSRSLRCRPSYHFIGSLAVADLLGSVIFVYSFVDFHVFHRKDSPNVFLFKLGGVTASFTASVGSLFLTAIDRYISIHRPLAYKRIVTRPKAVVAFCLMWTIAIVIAVLPLLGWNCKKLQSVCSDIFPLIDETYLMFWIGVTSVLLLFIVYAYMYILWKAHSHAVRMIQRGTQKSIIIHTSEDGKVQVTRPDQARMDIRLAKTLVLILVVLIICWGPLLAIMVYDVFGKMNKLIKTVFAFCSMLCLLNSTVNPIIYALRSKDLRHAFRSMFPSCEGTAQPLDNSMGDSDCLHKHANNTASMHRAAESCIKSTVKIAKVTMSVSTDTSAEAL.

Residues 1–121 (MKSILDGLAD…LNPSQQLAIA (121 aa)) lie on the Extracellular side of the membrane. The tract at residues 2 to 23 (KSILDGLADTTFRTITTDLLYV) is required for mitochondrial localization. Residues Asn78 and Asn84 are each glycosylated (N-linked (GlcNAc...) asparagine). Residues 122–142 (VLSLTLGTFTVLENLLVLCVI) traverse the membrane as a helical segment. Residues 143-155 (LHSRSLRCRPSYH) are Cytoplasmic-facing. Residues 156–176 (FIGSLAVADLLGSVIFVYSFV) traverse the membrane as a helical segment. Residues 177 to 188 (DFHVFHRKDSPN) are Extracellular-facing. A helical transmembrane segment spans residues 189 to 209 (VFLFKLGGVTASFTASVGSLF). Over 210 to 233 (LTAIDRYISIHRPLAYKRIVTRPK) the chain is Cytoplasmic. A helical transmembrane segment spans residues 234 to 254 (AVVAFCLMWTIAIVIAVLPLL). At 255 to 278 (GWNCKKLQSVCSDIFPLIDETYLM) the chain is on the extracellular side. Residues 279–299 (FWIGVTSVLLLFIVYAYMYIL) traverse the membrane as a helical segment. Over 300–345 (WKAHSHAVRMIQRGTQKSIIIHTSEDGKVQVTRPDQARMDIRLAKT) the chain is Cytoplasmic. The helical transmembrane segment at 346–366 (LVLILVVLIICWGPLLAIMVY) threads the bilayer. The Extracellular segment spans residues 367-378 (DVFGKMNKLIKT). Residues 379–399 (VFAFCSMLCLLNSTVNPIIYA) traverse the membrane as a helical segment. Over 400 to 473 (LRSKDLRHAF…VSTDTSAEAL (74 aa)) the chain is Cytoplasmic. Residue Cys416 is the site of S-palmitoyl cysteine attachment. Phosphoserine is present on residues Ser426 and Ser430.

The protein belongs to the G-protein coupled receptor 1 family. As to quaternary structure, interacts (via C-terminus) with CNRIP1. Associates with G protein alpha subunits, including G(i) alpha-1/GNAI1, G(i) alpha-3/GNAI3 and G(o)-alpha/GNAO1; palmitoylation is important for interaction with GNAI3 and GNAO1. Palmitoylation at Cys-416 is important for recruitment at both plasma membrane and lipid rafts and association with G protein alpha subunits. In terms of tissue distribution, expressed in brain neurons (at protein level). Detected throughout the striatum, cortex and hippocampus, with highest levels in the lateral striatum. In rostral brain regions, high expression levels in the dorsal lateral striatum, while in the caudal brain regions, high levels are observed in the ventral lateral striatum. Expressed in neurons. In the hypothalamus, expressed in both GABAergic and glutamatergic presynaptic terminals of POMC neurons (at protein level). Expressed in striated muscles, including skeletal muscles (gastrocnemius and rectus abdominis) and myocardium (at protein level). Expressed in the liver, with highest levels in Kupffer cells and lower levels in endothelial cells as well as hepatocytes, particularly in perivascular areas (at protein level). The hepatic expression level is up-regulated in obese mice compared to lean animals.

The protein localises to the cell membrane. The protein resides in the mitochondrion outer membrane. It is found in the cell projection. Its subcellular location is the axon. It localises to the presynapse. With respect to regulation, hemopressin, a peptide derived from hemoglobin subunit alpha (HBA1 and/or HBA2), acts as an antagonist peptide: hemopressin-binding efficiently blocks cannabinoid receptor CNR1 and subsequent signaling. Functionally, G-protein coupled receptor for cannabinoids, including endocannabinoids (eCBs), such as N-arachidonoylethanolamide (also called anandamide or AEA) and 2-arachidonoylglycerol (2-AG). Mediates many cannabinoid-induced effects, acting, among others, on food intake, memory loss, gastrointestinal motility, catalepsy, ambulatory activity, anxiety, chronic pain. Signaling typically involves reduction in cyclic AMP. In the hypothalamus, may have a dual effect on mitochondrial respiration depending upon the agonist dose and possibly upon the cell type. Increases respiration at low doses, while decreases respiration at high doses. At high doses, CNR1 signal transduction involves G-protein alpha-i protein activation and subsequent inhibition of mitochondrial soluble adenylate cyclase, decrease in cyclic AMP concentration, inhibition of protein kinase A (PKA)-dependent phosphorylation of specific subunits of the mitochondrial electron transport system, including NDUFS2. In the hypothalamus, inhibits leptin-induced reactive oxygen species (ROS) formation and mediates cannabinoid-induced increase in SREBF1 and FASN gene expression. In response to cannabinoids, drives the release of orexigenic beta-endorphin, but not that of melanocyte-stimulating hormone alpha/alpha-MSH, from hypothalamic POMC neurons, hence promoting food intake. In the hippocampus, regulates cellular respiration and energy production in response to cannabinoids. Involved in cannabinoid-dependent depolarization-induced suppression of inhibition (DSI), a process in which depolarization of CA1 postsynaptic pyramidal neurons mobilizes eCBs, which retrogradely activate presynaptic CB1 receptors, transiently decreasing GABAergic inhibitory neurotransmission. Also reduces excitatory synaptic transmission. In superior cervical ganglions and cerebral vascular smooth muscle cells, inhibits voltage-gated Ca(2+) channels in a constitutive, as well as agonist-dependent manner. In cerebral vascular smooth muscle cells, cannabinoid-induced inhibition of voltage-gated Ca(2+) channels leads to vasodilation and decreased vascular tone. Induces leptin production in adipocytes and reduces LRP2-mediated leptin clearance in the kidney, hence participating in hyperleptinemia. In adipose tissue, CNR1 signaling leads to increased expression of SREBF1, ACACA and FASN genes. In the liver, activation by endocannabinoids leads to increased de novo lipogenesis and reduced fatty acid catabolism, associated with increased expression of SREBF1/SREBP-1, GCK, ACACA, ACACB and FASN genes. May also affect de novo cholesterol synthesis and HDL-cholesteryl ether uptake. Peripherally modulates energy metabolism. In high carbohydrate diet-induced obesity, may decrease the expression of mitochondrial dihydrolipoyl dehydrogenase/DLD in striated muscles, as well as that of selected glucose/ pyruvate metabolic enzymes, hence affecting energy expenditure through mitochondrial metabolism. In response to cannabinoid anandamide, elicits a pro-inflammatory response in macrophages, which involves NLRP3 inflammasome activation and IL1B and IL18 secretion. In macrophages infiltrating pancreatic islets, this process may participate in the progression of type-2 diabetes and associated loss of pancreatic beta-cells. The chain is Cannabinoid receptor 1 (Cnr1) from Mus musculus (Mouse).